Here is a 559-residue protein sequence, read N- to C-terminus: Spermidine/putrescine import ATP-binding protein PotA (559 aa).

In terms of domain architecture, ABC transporter spans 7–448; sequence IEIEGLNKTF…PKTEWIANFI (442 aa). 40–47 is a binding site for ATP; it reads GPSGCGKT. The segment at 108–317 is insert; it reads WTKLDEIPKL…EAFEKRYLSR (210 aa).

It belongs to the ABC transporter superfamily. Spermidine/putrescine importer (TC 3.A.1.11.1) family. The complex is composed of two ATP-binding proteins (PotA), two transmembrane proteins (PotB and PotC) and a solute-binding protein (PotD).

The protein resides in the cell membrane. The enzyme catalyses ATP + H2O + polyamine-[polyamine-binding protein]Side 1 = ADP + phosphate + polyamineSide 2 + [polyamine-binding protein]Side 1.. Functionally, part of the ABC transporter complex PotABCD involved in spermidine/putrescine import. Responsible for energy coupling to the transport system. The polypeptide is Spermidine/putrescine import ATP-binding protein PotA (Mycoplasma genitalium (strain ATCC 33530 / DSM 19775 / NCTC 10195 / G37) (Mycoplasmoides genitalium)).